Consider the following 184-residue polypeptide: MDSLKNHLLIAMPSLDGSFFERTVIYVCEHDEKGAMGIVINRPIGLSVEALLIQMDLDAEANLSDDAQVLIGGPVLPDRGFVLHSPEKVWTNSEAVSDYCTLTTSRDILNAIGSADAPSQFKVALGYSGWSKDQLEQELADNTWLTIKASSELVFDVDYEQLWTLATKELGFDIWQLSSQTGHC.

It belongs to the UPF0301 (AlgH) family.

In Shewanella denitrificans (strain OS217 / ATCC BAA-1090 / DSM 15013), this protein is UPF0301 protein Sden_2674.